A 1445-amino-acid polypeptide reads, in one-letter code: DNA-directed RNA polymerase subunit beta'' (1445 aa).

Zn(2+)-binding residues include C220, C293, C300, and C303.

It belongs to the RNA polymerase beta' chain family. RpoC2 subfamily. In plastids the minimal PEP RNA polymerase catalytic core is composed of four subunits: alpha, beta, beta', and beta''. When a (nuclear-encoded) sigma factor is associated with the core the holoenzyme is formed, which can initiate transcription. Zn(2+) serves as cofactor.

Its subcellular location is the plastid. It is found in the chloroplast. It catalyses the reaction RNA(n) + a ribonucleoside 5'-triphosphate = RNA(n+1) + diphosphate. Its function is as follows. DNA-dependent RNA polymerase catalyzes the transcription of DNA into RNA using the four ribonucleoside triphosphates as substrates. The polypeptide is DNA-directed RNA polymerase subunit beta'' (Anthoceros angustus (Hornwort)).